The following is a 157-amino-acid chain: Protein Smg homolog (157 aa).

It belongs to the Smg family.

The polypeptide is Protein Smg homolog (Shewanella pealeana (strain ATCC 700345 / ANG-SQ1)).